The following is a 488-amino-acid chain: Aerolysin (488 aa).

The signal sequence occupies residues 1 to 24; sequence MMNRIITANLAFLASSLMLAQVQA. 2 cysteine pairs are disulfide-bonded: Cys43/Cys99 and Cys183/Cys188. Residues 69–85 are interaction with host N-linked glycan; sequence WQITGLADRWVIMGPGY. A part of the transmembrane beta-barrel after proteolytic activation of the toxin and insertion into the host membrane region spans residues 256–288; sequence YSLSEKVTTKNKFQWPLVGETELAIEIAASQSW. The interaction with glycans from host GPI-anchor stretch occupies residues 346–355; that stretch reads RWGGNAWYTH. Residues 444–488 constitute a propeptide that is removed on maturation; it reads TRSAKAAQLRSASAEEVALTSVDLDSEALANEGFGNVSLTIVPVQ.

Belongs to the aerolysin family. In terms of assembly, homodimer in solution; homoheptamer in the host membrane. After binding to GPI-anchored proteins in target membranes and proteolytic removal of the C-terminal propeptide, the protein assembles into a heptameric pre-pore complex. A further conformation change leads to insertion into the host membrane. In terms of processing, proteolytic cleavage and subsequent release of the propeptide trigger a major conformation change, leading to the formation of a heptameric pre-pore that then inserts into the host membrane.

It is found in the secreted. The protein resides in the host cell membrane. In terms of biological role, secreted, cytolytic toxin that forms pores in host membranes after proteolytic removal of a C-terminal propeptide, leading to destruction of the membrane permeability barrier and cell death. The pores are formed by transmembrane beta-strands and are approximately 3 nm in diameter. The polypeptide is Aerolysin (asa1) (Aeromonas sobria).